Consider the following 77-residue polypeptide: Large ribosomal subunit protein eL20 (77 aa).

It belongs to the eukaryotic ribosomal protein eL20 family. In terms of assembly, part of the 50S ribosomal subunit. Binds 23S rRNA.

This Pyrococcus furiosus (strain ATCC 43587 / DSM 3638 / JCM 8422 / Vc1) protein is Large ribosomal subunit protein eL20.